The sequence spans 1283 residues: uncharacterized protein (1283 aa).

Positions 10–46 (ACPPNTFTCADGSCIPSDWKGDGEKDCEDGSDEEAVT) constitute an LDL-receptor class A domain. 2 disulfide bridges follow: Cys11–Cys23 and Cys18–Cys36. The tract at residues 27-47 (DWKGDGEKDCEDGSDEEAVTG) is disordered. The span at 34–45 (KDCEDGSDEEAV) shows a compositional bias: acidic residues. Asn79 carries an N-linked (GlcNAc...) asparagine glycan. The tract at residues 236 to 278 (STTLIVDETTESTSASAEDDDDDVLTTNTSEESTATTAHDEEV) is disordered. Positions 261 to 272 (TTNTSEESTATT) are enriched in low complexity. Residues 332–389 (YQKTLEKEKCAIRNATSKCEALISYNNNLDCAIVTMNDECEVDAQNLVVELQEEVNDL) adopt a coiled-coil conformation. Disordered stretches follow at residues 621–651 (ARPT…VASS) and 1005–1046 (SSST…PTDG). Residues 626–647 (VTMPPRAPTAKPLPIPSAPTPP) are compositionally biased toward pro residues. The span at 1005–1015 (SSSTMVSTSSE) shows a compositional bias: low complexity. The span at 1016-1026 (SDSESAPEQET) shows a compositional bias: acidic residues. A compositionally biased stretch (low complexity) spans 1027 to 1044 (EPTVPSTTETTESPSTPT). A helical membrane pass occupies residues 1263 to 1283 (VQSSVSFHIILAALIPFFALF).

The protein resides in the membrane. This is an uncharacterized protein from Caenorhabditis elegans.